Here is a 1024-residue protein sequence, read N- to C-terminus: Nardilysin-like (1024 aa).

The tract at residues 41–103 (PDIYPEGSVP…DEVKGKGDHQ (63 aa)) is disordered. Acidic residues predominate over residues 52–95 (QIDEDDEDGEEEDSDGSSEDDDDDEDDEEDGEGDEEDEDEDEDE). H129 contributes to the Zn(2+) binding site. The Proton acceptor role is filled by E132. Position 133 (H133) interacts with Zn(2+). The active site involves E203. E210 contributes to the Zn(2+) binding site.

It belongs to the peptidase M16 family. The cofactor is Zn(2+).

The catalysed reaction is Hydrolysis of polypeptides, preferably at -Xaa-|-Arg-Lys-, and less commonly at -Arg-|-Arg-Xaa-, in which Xaa is not Arg or Lys.. Functionally, cleaves peptide substrates on the N-terminus of arginine residues in dibasic pairs. This Arabidopsis thaliana (Mouse-ear cress) protein is Nardilysin-like.